A 168-amino-acid chain; its full sequence is Sec-independent protein translocase protein TatB (168 aa).

The helical transmembrane segment at 1 to 21 (MIDLGISKLALIGAVALIVIG) threads the bilayer. 2 disordered regions span residues 92 to 132 (FDGS…QGAR) and 146 to 168 (VQSG…SFFE). Positions 94-107 (GSASSSSSSDTGSG) are enriched in low complexity. Positions 117 to 126 (KSHNGRKSWR) are enriched in basic residues.

This sequence belongs to the TatB family. The Tat system comprises two distinct complexes: a TatABC complex, containing multiple copies of TatA, TatB and TatC subunits, and a separate TatA complex, containing only TatA subunits. Substrates initially bind to the TatABC complex, which probably triggers association of the separate TatA complex to form the active translocon.

It localises to the cell inner membrane. In terms of biological role, part of the twin-arginine translocation (Tat) system that transports large folded proteins containing a characteristic twin-arginine motif in their signal peptide across membranes. Together with TatC, TatB is part of a receptor directly interacting with Tat signal peptides. TatB may form an oligomeric binding site that transiently accommodates folded Tat precursor proteins before their translocation. This Cupriavidus metallidurans (strain ATCC 43123 / DSM 2839 / NBRC 102507 / CH34) (Ralstonia metallidurans) protein is Sec-independent protein translocase protein TatB.